A 390-amino-acid chain; its full sequence is Neuromedin-B receptor (390 aa).

Residues 1–20 (MPPRSLPNLSLPTEASESEL) are disordered. Residues 1–41 (MPPRSLPNLSLPTEASESELEPEVWENDFLPDSDGTTAELV) lie on the Extracellular side of the membrane. N8 carries N-linked (GlcNAc...) asparagine glycosylation. The helical transmembrane segment at 42-65 (IRCVIPSLYLIIISVGLLGNIMLV) threads the bilayer. Topologically, residues 66 to 79 (KIFLTNSTMRSVPN) are cytoplasmic. A helical transmembrane segment spans residues 80 to 99 (IFISNLAAGDLLLLLTCVPV). The Extracellular segment spans residues 100-117 (DASRYFFDEWVFGKLGCK). A disulfide bridge links C116 with C198. Residues 118–139 (LIPAIQLTSVGVSVFTLTALSA) traverse the membrane as a helical segment. Residues 140–156 (DRYRAIVNPMDMQTSGV) lie on the Cytoplasmic side of the membrane. The helical transmembrane segment at 157 to 177 (VLWTSLKAVGIWVVSVLLAVP) threads the bilayer. At 178–211 (EAVFSEVARIGSSDNSSFTACIPYPQTDELHPKI) the chain is on the extracellular side. Residue N192 is glycosylated (N-linked (GlcNAc...) asparagine). Residues 212–235 (HSVLIFLVYFLIPLVIISIYYYHI) form a helical membrane-spanning segment. Residues 236-266 (AKTLIRSAHNLPGEYNEHTKKQMETRKRLAK) lie on the Cytoplasmic side of the membrane. The chain crosses the membrane as a helical span at residues 267-287 (IVLVFVGCFVFCWFPNHILYL). Topologically, residues 288–299 (YRSFNYKEIDPS) are extracellular. Residues 300–327 (LGHMIVTLVARVLSFSNSCVNPFALYLL) traverse the membrane as a helical segment. Residues 328-390 (SESFRKHFNS…GHSTKQEIAL (63 aa)) are Cytoplasmic-facing. A lipid anchor (S-palmitoyl cysteine) is attached at C341. S352 is subject to Phosphoserine.

Belongs to the G-protein coupled receptor 1 family. As to expression, brain (olfactory bulb and central thalamic regions), and esophagus.

Its subcellular location is the cell membrane. Its function is as follows. Receptor for neuromedin-B. Contributes to the maintenance of basal sigh rate through signaling in the pre-Botzinger complex, a cluster of several thousand neurons in the ventrolateral medulla responsible for inspiration during respiratory activity. Contributes to the induction of sneezing following exposure to chemical irritants or allergens which causes release of NMB by nasal sensory neurons and activation of NMBR-expressing neurons in the sneeze-evoking region of the brainstem. These in turn activate neurons of the caudal ventral respiratory group, giving rise to the sneezing response. Contributes to induction of acute itch, possibly through its activation on dorsal root ganglion neurons by the NMB peptide. Plays a role in the innate immune response to influenza A virus infection by enhancing interferon alpha expression and reducing expression of IL6. Plays a role in CSF1-induced proliferation of osteoclast precursors by contributing to the positive regulation of the expression of the CSF1 receptor CSF1R. This is Neuromedin-B receptor (Nmbr) from Rattus norvegicus (Rat).